The sequence spans 121 residues: uncharacterized protein (121 aa).

Positions 1–23 (MNFSTVFQAIIAVLGLTTVTALA) are cleaved as a signal peptide. 2 N-linked (GlcNAc...) asparagine glycosylation sites follow: Asn68 and Asn84.

Post-translationally, N-glycosylated.

This is an uncharacterized protein from Saccharomyces cerevisiae (strain ATCC 204508 / S288c) (Baker's yeast).